The primary structure comprises 224 residues: Urease accessory protein UreF (224 aa).

This sequence belongs to the UreF family. In terms of assembly, ureD, UreF and UreG form a complex that acts as a GTP-hydrolysis-dependent molecular chaperone, activating the urease apoprotein by helping to assemble the nickel containing metallocenter of UreC. The UreE protein probably delivers the nickel.

The protein localises to the cytoplasm. In terms of biological role, required for maturation of urease via the functional incorporation of the urease nickel metallocenter. This is Urease accessory protein UreF from Ectopseudomonas mendocina (strain ymp) (Pseudomonas mendocina).